We begin with the raw amino-acid sequence, 451 residues long: Target of rapamycin complex 1 subunit tco89 (451 aa).

The tract at residues 1 to 35 is disordered; sequence MERPSLSRRTSSSTVSTDGEGVYSRSTKERKRNFI. Over residues 7–17 the composition is skewed to low complexity; sequence SRRTSSSTVST. Serine 70 is modified (phosphoserine). 3 disordered regions span residues 122–164, 176–264, and 362–437; these read WDDA…PVTR, INSN…GNSL, and NQNF…DTDY. Over residues 129 to 162 the composition is skewed to polar residues; the sequence is NDSTAGNLDSDSALPTPSVTTNEAADSSRASSPV. A compositionally biased stretch (low complexity) spans 203–215; the sequence is DDSAADASTTKSS. Composition is skewed to polar residues over residues 228–242, 362–376, and 407–417; these read HSNN…NQPK, NQNF…TSAA, and QSASLNASMSA. The span at 419-430 shows a compositional bias: basic residues; it reads SHARQRSIHVPK.

It belongs to the TORC subunit TCO89 family. In terms of assembly, the target of rapamycin complex 1 (TORC1) is composed of at least mip1, pop3/wat1, tco89, toc1 and tor2. Post-translationally, either Thr-10, Ser-11, Ser-12, Ser-13 or Thr-14 and Ser-214 or Ser-215 and Ser-247 or Ser-249 are phosphorylated as well.

The protein resides in the cytoplasm. In terms of biological role, component of TORC1, which regulates multiple cellular processes to control cell growth in response to environmental signals. Tor2 is essential for growth. Nutrient limitation and environmental stress signals cause inactivation of TORC1. Active TORC1 positively controls cell growth and ribosome biogenesis by regulating ribosomal protein gene expression. TORC1 negatively controls G1 cell-cycle arrest, sexual development and amino acid uptake. Represses mating, meiosis and sporulation efficiency by interfering with the functions of the transcription factor ste11 and the meiosis-promoting RNA-binding protein mei2. This chain is Target of rapamycin complex 1 subunit tco89, found in Schizosaccharomyces pombe (strain 972 / ATCC 24843) (Fission yeast).